Here is a 420-residue protein sequence, read N- to C-terminus: 5'-deoxyadenosine deaminase (420 aa).

Zn(2+)-binding residues include His-55 and His-57. Substrate is bound by residues Glu-84 and His-176. His-203 contacts Zn(2+). Substrate is bound by residues Glu-206 and Asp-292. Zn(2+) is bound at residue Asp-292.

The protein belongs to the metallo-dependent hydrolases superfamily. MTA/SAH deaminase family. Homotetramer. It depends on Zn(2+) as a cofactor.

It carries out the reaction 5'-deoxyadenosine + H2O + H(+) = 5'-deoxyinosine + NH4(+). The catalysed reaction is S-adenosyl-L-homocysteine + H2O + H(+) = S-inosyl-L-homocysteine + NH4(+). It catalyses the reaction S-methyl-5'-thioadenosine + H2O + H(+) = S-methyl-5'-thioinosine + NH4(+). The enzyme catalyses adenosine + H2O + H(+) = inosine + NH4(+). The protein operates within amino-acid biosynthesis; S-adenosyl-L-methionine biosynthesis. In terms of biological role, catalyzes the deamination of three SAM-derived enzymatic products, namely 5'-deoxyadenosine, S-adenosyl-L-homocysteine, and 5'-methylthioadenosine, to produce the inosine analogs. Can also deaminate adenosine. The preferred substrate for this enzyme is 5'-deoxyadenosine, but all these substrates are efficiently deaminated. Likely functions in a S-adenosyl-L-methionine (SAM) recycling pathway from S-adenosyl-L-homocysteine (SAH) produced from SAM-dependent methylation reactions. May also be involved in the recycling of 5'-deoxyadenosine, whereupon the 5'-deoxyribose moiety of 5'-deoxyinosine is further metabolized to deoxyhexoses used for the biosynthesis of aromatic amino acids in methanogens. The polypeptide is 5'-deoxyadenosine deaminase (Methanocaldococcus jannaschii (strain ATCC 43067 / DSM 2661 / JAL-1 / JCM 10045 / NBRC 100440) (Methanococcus jannaschii)).